The following is a 467-amino-acid chain: Asparagine--tRNA ligase (467 aa).

It belongs to the class-II aminoacyl-tRNA synthetase family. Homodimer.

Its subcellular location is the cytoplasm. The catalysed reaction is tRNA(Asn) + L-asparagine + ATP = L-asparaginyl-tRNA(Asn) + AMP + diphosphate + H(+). The chain is Asparagine--tRNA ligase from Haemophilus influenzae (strain PittGG).